The chain runs to 852 residues: Probable inorganic carbon transporter subunit DabA (852 aa).

4 residues coordinate Zn(2+): Cys370, Asp372, His554, and Cys569.

It belongs to the inorganic carbon transporter (TC 9.A.2) DabA family. Forms a complex with DabB. Requires Zn(2+) as cofactor.

It localises to the cell inner membrane. Functionally, part of an energy-coupled inorganic carbon pump. In Novosphingobium aromaticivorans (strain ATCC 700278 / DSM 12444 / CCUG 56034 / CIP 105152 / NBRC 16084 / F199), this protein is Probable inorganic carbon transporter subunit DabA.